A 228-amino-acid chain; its full sequence is Derlin-3 (228 aa).

Residues 1–22 (MAGQRLAAGFLQVPAVTRAYTA) are Cytoplasmic-facing. The chain crosses the membrane as a helical span at residues 23-43 (ACVLTTAAVQLELLSPFQLYF). Over 44-57 (NPHLVFRKFQVWRL) the chain is Lumenal. Residues 58–78 (ITTFLFFGPLGFGFFFNMLFV) traverse the membrane as a helical segment. At 79–98 (FRYCRMLEEGSFRGRKADFV) the chain is on the cytoplasmic side. Residues 99–119 (FMFLFGGVLMTLLGFLGSLFF) form a helical membrane-spanning segment. The Lumenal portion of the chain corresponds to 120–168 (LGQALMAMLVYVWSRRSPHVRVNFFGLLNFQAPFLPWALMGFSLLLGNS). A helical membrane pass occupies residues 169 to 189 (VVTDLLGILVGHIYYFLEDVF). The Cytoplasmic segment spans residues 190 to 228 (PNQPGGKRLLLTPSVLKLLLDDPQEDPDYLPLPEEQPEL).

Belongs to the derlin family. Forms homo- and heterooligomers with DERL2 and, to a lesser extent, with DERL1. Interacts with VCP and EDEM1. Interacts with SELENOK and SELENOS. Interacts with the signal recognition particle/SRP and the SRP receptor; in the process of endoplasmic reticulum stress-induced pre-emptive quality control. As to expression, highly expressed in spleen, lung, liver, spleen and testis. Expressed at intermediate level in kidney. Weakly or not expressed in brain, heart and skeletal muscle.

Its subcellular location is the endoplasmic reticulum membrane. Functional component of endoplasmic reticulum-associated degradation (ERAD) for misfolded lumenal glycoproteins, but not that of misfolded nonglycoproteins. May act by forming a channel that allows the retrotranslocation of misfolded glycoproteins into the cytosol where they are ubiquitinated and degraded by the proteasome. May mediate the interaction between VCP and the misfolded glycoproteins. May be involved in endoplasmic reticulum stress-induced pre-emptive quality control, a mechanism that selectively attenuates the translocation of newly synthesized proteins into the endoplasmic reticulum and reroutes them to the cytosol for proteasomal degradation. The chain is Derlin-3 from Mus musculus (Mouse).